A 275-amino-acid polypeptide reads, in one-letter code: Caspase-3 (275 aa).

Met1 bears the N-acetylmethionine mark. 2 propeptides span residues 1–9 and 10–28; these read MENTENSVD and SKSIKTSETKILHGSKSMD. Lys11 carries the N6-acetyllysine modification. Position 26 is a phosphoserine (Ser26). Catalysis depends on residues His121 and Cys163. Cys163 carries the S-nitrosocysteine; in inhibited form modification.

The protein belongs to the peptidase C14A family. In terms of assembly, heterotetramer that consists of two anti-parallel arranged heterodimers, each one formed by a 17 kDa (p17) and a 12 kDa (p12) subunit. Interacts with BIRC6/bruce. Post-translationally, cleavage by granzyme B, caspase-6, caspase-8 and caspase-10 generates the two active subunits. Additional processing of the propeptides is likely due to the autocatalytic activity of the activated protease. Active heterodimers between the small subunit of caspase-7 protease and the large subunit of caspase-3 also occur and vice versa. In terms of processing, S-nitrosylated on its catalytic site cysteine in unstimulated cell lines and denitrosylated upon activation of the Fas apoptotic pathway, associated with an increase in intracellular caspase activity. Fas therefore activates caspase-3 not only by inducing the cleavage of the caspase zymogen to its active subunits, but also by stimulating the denitrosylation of its active site thiol. Ubiquitinated by BIRC6; this activity is inhibited by DIABLO/SMAC.

The protein resides in the cytoplasm. It carries out the reaction Strict requirement for an Asp residue at positions P1 and P4. It has a preferred cleavage sequence of Asp-Xaa-Xaa-Asp-|- with a hydrophobic amino-acid residue at P2 and a hydrophilic amino-acid residue at P3, although Val or Ala are also accepted at this position.. With respect to regulation, inhibited by BIRC6; following inhibition of BIRC6-caspase binding by DIABLO/SMAC, BIRC6 is subjected to caspase cleavage, leading to an increase in active caspases. In terms of biological role, involved in the activation cascade of caspases responsible for apoptosis execution. At the onset of apoptosis, it proteolytically cleaves poly(ADP-ribose) polymerase PARP1 at a '216-Asp-|-Gly-217' bond. Cleaves and activates sterol regulatory element binding proteins (SREBPs) between the basic helix-loop-helix leucine zipper domain and the membrane attachment domain. Cleaves and activates caspase-6, -7 and -9 (CASP6, CASP7 and CASP9, respectively). Cleaves and inactivates interleukin-18 (IL18). Triggers cell adhesion in sympathetic neurons through RET cleavage. Cleaves IL-1 beta between an Asp and an Ala, releasing the mature cytokine which is involved in a variety of inflammatory processes. Cleaves and inhibits serine/threonine-protein kinase AKT1 in response to oxidative stress. Acts as an inhibitor of type I interferon production during virus-induced apoptosis by mediating cleavage of antiviral proteins CGAS, IRF3 and MAVS, thereby preventing cytokine overproduction. Also involved in pyroptosis by mediating cleavage and activation of gasdermin-E (GSDME). Cleaves XRCC4 and phospholipid scramblase proteins XKR4, XKR8 and XKR9, leading to promote phosphatidylserine exposure on apoptotic cell surface. Cleaves BIRC6 following inhibition of BIRC6-caspase binding by DIABLO/SMAC. In Bos taurus (Bovine), this protein is Caspase-3 (CASP3).